We begin with the raw amino-acid sequence, 264 residues long: Hydroxyethylthiazole kinase (264 aa).

M41 is a binding site for substrate. Positions 117 and 163 each coordinate ATP. G190 is a substrate binding site.

This sequence belongs to the Thz kinase family. Mg(2+) is required as a cofactor.

The enzyme catalyses 5-(2-hydroxyethyl)-4-methylthiazole + ATP = 4-methyl-5-(2-phosphooxyethyl)-thiazole + ADP + H(+). Its pathway is cofactor biosynthesis; thiamine diphosphate biosynthesis; 4-methyl-5-(2-phosphoethyl)-thiazole from 5-(2-hydroxyethyl)-4-methylthiazole: step 1/1. Its function is as follows. Catalyzes the phosphorylation of the hydroxyl group of 4-methyl-5-beta-hydroxyethylthiazole (THZ). The chain is Hydroxyethylthiazole kinase from Thermoanaerobacter pseudethanolicus (strain ATCC 33223 / 39E) (Clostridium thermohydrosulfuricum).